We begin with the raw amino-acid sequence, 361 residues long: Adenosine kinase (361 aa).

Positions 7-15 (PKPKKLKVE) match the Nuclear localization signal motif. Aspartate 34 contributes to the adenosine binding site. A Mg(2+)-binding site is contributed by serine 48. Tyrosine 76 bears the Phosphotyrosine mark. Positions 146 and 147 each coordinate Mg(2+). An adenosine-binding site is contributed by glutamine 305. Residue aspartate 316 is part of the active site. The active-site Proton acceptor is aspartate 316.

Belongs to the carbohydrate kinase PfkB family. As to quaternary structure, monomer. The cofactor is Mg(2+). The N-terminus is blocked.

It is found in the nucleus. It catalyses the reaction adenosine + ATP = AMP + ADP + H(+). It functions in the pathway purine metabolism; AMP biosynthesis via salvage pathway; AMP from adenosine: step 1/1. Its activity is regulated as follows. Activity is inhibited by 5-iodotubercidin and 5'-amino-5'-deoxyadenosine. Its function is as follows. Catalyzes the phosphorylation of the purine nucleoside adenosine at the 5' position in an ATP-dependent manner. Serves as a potential regulator of concentrations of extracellular adenosine and intracellular adenine nucleotides. The sequence is that of Adenosine kinase (ADK) from Cricetulus griseus (Chinese hamster).